A 482-amino-acid polypeptide reads, in one-letter code: Pentatricopeptide repeat-containing protein At1g74900, mitochondrial (482 aa).

PPR repeat units follow at residues 90-124 (DASS…RIGP), 125-159 (SPKT…GCFQ), 160-190 (DLAS…LRGR), 194-228 (DTVT…GINP), 229-263 (NLTT…DCEI), 264-298 (DVVT…GVLP), 299-333 (SVAT…GYEP), 334-368 (NVTT…GCEP), 369-403 (NFQT…DCLP), 404-441 (NLDT…GFIP), and 442-476 (RKFT…GSRL).

Belongs to the PPR family. P subfamily.

The protein resides in the mitochondrion. Required for the trans-splicing of intron 1 of the mitochondrial nad1 transcript encoding the ND1 subunit of the mitochondrial membrane respiratory chain NADH dehydrogenase (Complex I). The polypeptide is Pentatricopeptide repeat-containing protein At1g74900, mitochondrial (OTP43) (Arabidopsis thaliana (Mouse-ear cress)).